We begin with the raw amino-acid sequence, 507 residues long: Maturase K (507 aa).

Belongs to the intron maturase 2 family. MatK subfamily.

It localises to the plastid. Its subcellular location is the chloroplast. Usually encoded in the trnK tRNA gene intron. Probably assists in splicing its own and other chloroplast group II introns. This chain is Maturase K, found in Ranunculus acris (Meadow buttercup).